The primary structure comprises 887 residues: Probable dual specificity protein kinase madd-3 (887 aa).

Disordered stretches follow at residues 77 to 147, 163 to 299, 313 to 333, 347 to 475, and 504 to 533; these read PIKS…ISAA, AQPP…PKAL, LPQS…STGG, TTIC…KSAA, and RKPS…QHQD. Positions 108-118 are enriched in low complexity; that stretch reads PTQNPVQLPLP. Basic and acidic residues predominate over residues 121–130; that stretch reads VSEKPGDKKS. Residues 177-192 are compositionally biased toward polar residues; it reads SETNSGSGPVSKQVSG. Residues 217–241 show a composition bias toward low complexity; sequence SSASTRAKAASAVAPEANPAPVPTA. Polar residues-rich tracts occupy residues 314 to 332 and 356 to 366; these read PQSS…TSTG and NVPSTSQPQQG. Basic and acidic residues predominate over residues 367–377; it reads DNEKRLIEKKL. The segment covering 407 to 419 has biased composition (low complexity); sequence LSSNLTTTNNNNN. The span at 439–462 shows a compositional bias: polar residues; that stretch reads FSTQAGSGNATTVDDPASTTTSKE. One can recognise a Protein kinase domain in the interval 551–863; it reads FTIYDTLGEG…LPEALQHRYF (313 aa). ATP contacts are provided by residues 557–565 and Lys580; that span reads LGEGTFGKV. The active-site Proton acceptor is Asp677.

The protein belongs to the protein kinase superfamily. CMGC Ser/Thr protein kinase family. Lammer subfamily. As to expression, expressed in body wall, vulval and anal depressor muscles.

It is found in the cytoplasm. It localises to the nucleus. Its function is as follows. Probable dual specificity kinase acting on both serine/threonine and tyrosine-containing substrates. Negatively regulates p38 MAPK signaling to allow for the plasma membrane of body wall muscle cells to form projections, also called muscle arms, that extend and connect the body wall muscles to target motor neurons. Negative regulation of p38 MAPK signaling may in turn modulate the trafficking of the muscle specific receptor eva-1 to the lysosome, to ensure proper display of the eva-1 receptor on the plasma membrane of muscle cells and allow for muscle arm extension towards guidance cues. The sequence is that of Probable dual specificity protein kinase madd-3 from Caenorhabditis elegans.